The sequence spans 101 residues: Urease subunit beta (101 aa).

It belongs to the urease beta subunit family. Heterotrimer of UreA (gamma), UreB (beta) and UreC (alpha) subunits. Three heterotrimers associate to form the active enzyme.

Its subcellular location is the cytoplasm. The enzyme catalyses urea + 2 H2O + H(+) = hydrogencarbonate + 2 NH4(+). It participates in nitrogen metabolism; urea degradation; CO(2) and NH(3) from urea (urease route): step 1/1. The protein is Urease subunit beta of Cupriavidus necator (strain ATCC 17699 / DSM 428 / KCTC 22496 / NCIMB 10442 / H16 / Stanier 337) (Ralstonia eutropha).